The sequence spans 425 residues: Raffinose permease (425 aa).

Over 1 to 11 (MNSASTHKNTD) the chain is Cytoplasmic. Residues 12-32 (FWIFGLFFFLYFFIMATCFPF) form a helical membrane-spanning segment. Topologically, residues 33–48 (LPVWLSDVVGLSKTDT) are periplasmic. The chain crosses the membrane as a helical span at residues 49-69 (GIVFSCLSLFAISFQPLLGVI). Topologically, residues 70–78 (SDRLGLKKN) are cytoplasmic. A helical transmembrane segment spans residues 79-99 (LIWSISLLLVFFAPFFLYVFA). Over 100–105 (PLLHLN) the chain is Periplasmic. A helical membrane pass occupies residues 106-126 (IWAGALTGGVFIGFVFSAGAG). Residues 127-147 (AIEAYIERVSRSSGFEYGKAR) are Cytoplasmic-facing. A helical membrane pass occupies residues 148–168 (MFGCLGWALCATMAGILFNVD). Position 169 (P169) is a topological domain, periplasmic. Residues 170 to 190 (SLVFWMGSGGALLLLLLLYLA) form a helical membrane-spanning segment. At 191–229 (RPSTSQTAMVMNALGANSSLISTRMVFSLFRMRQMWMFV) the chain is on the cytoplasmic side. A helical transmembrane segment spans residues 230–250 (LYTIGVACVYDVFDQQFAIFF). Topologically, residues 251–265 (RSFFDTPQAGIKAFG) are periplasmic. The chain crosses the membrane as a helical span at residues 266-286 (FATTAGEICNAIIMFCTPWII). Topologically, residues 287-294 (NRIGAKNT) are cytoplasmic. A helical membrane pass occupies residues 295-315 (LLVAGGIMTIRITGSAFATTM). A topological domain (periplasmic) is located at residue T316. The chain crosses the membrane as a helical span at residues 317-337 (EVVILKMLHALEVPFLLVGAF). Over 338 to 351 (KYITGVFDTRLSAT) the chain is Cytoplasmic. The helical transmembrane segment at 352–372 (VYLIGFQFSKQLAAILLSTFA) threads the bilayer. Residues 373–383 (GHLYDRMGFQN) lie on the Periplasmic side of the membrane. The chain crosses the membrane as a helical span at residues 384 to 404 (TYFVLGMIVLTVTVISAFTLS). At 405–425 (SSPGIVHPSVEKAPVAHSEIN) the chain is on the cytoplasmic side.

It belongs to the major facilitator superfamily. Oligosaccharide:H(+) symporter (OHS) (TC 2.A.1.5) family. In terms of assembly, monomer.

It is found in the cell inner membrane. In terms of biological role, responsible for transport of raffinose into the cell. Can also transport lactose and melibiose. Has weak activity with maltose. The protein is Raffinose permease of Escherichia coli.